Reading from the N-terminus, the 594-residue chain is Aspartate--tRNA(Asp/Asn) ligase (594 aa).

E173 is a binding site for L-aspartate. The segment at 197 to 200 is aspartate; it reads QLFK. Residue R219 participates in L-aspartate binding. ATP-binding positions include 219-221 and Q228; that span reads RDE. L-aspartate is bound at residue H449. An ATP-binding site is contributed by E482. R489 contacts L-aspartate. 534 to 537 is an ATP binding site; sequence GLDR.

The protein belongs to the class-II aminoacyl-tRNA synthetase family. Type 1 subfamily. As to quaternary structure, homodimer.

The protein resides in the cytoplasm. The enzyme catalyses tRNA(Asx) + L-aspartate + ATP = L-aspartyl-tRNA(Asx) + AMP + diphosphate. In terms of biological role, aspartyl-tRNA synthetase with relaxed tRNA specificity since it is able to aspartylate not only its cognate tRNA(Asp) but also tRNA(Asn). Reaction proceeds in two steps: L-aspartate is first activated by ATP to form Asp-AMP and then transferred to the acceptor end of tRNA(Asp/Asn). In Saccharophagus degradans (strain 2-40 / ATCC 43961 / DSM 17024), this protein is Aspartate--tRNA(Asp/Asn) ligase.